The sequence spans 449 residues: MQVTETQAEGLKRAYTVVLPAAELDAKAQDRLVELKDKVRINGFRPGKVPLSHLKSLYGKSVMAEVIEQAVTEANGKIVEDNGLRLALPPKVELPQAEDEVKSVIEGQADLKYTVELEVLPKIELGNFKDIAIEKPVAIVTDEEVDEMVKRIADGNRSFDAKEGAAASGDRITVDFVGSIDGVPFEGGAGEDVPVVIGSNSFIPGFEEQLIGLSAGEERTINVTFPTNYLSAQLAGKDASFAVKAKQVEAPGELTIDDEFAKTLGLESLDKLKENVRERIAKEHEGATRQRVKRQLLDALDAGHKFDVPPTLVSQEFEGVWQQIQTDLQQQGRTFADESTTEEEARAEYQRIAERRVRLGLVLAEIGERNNIQVTDDEVTRAVVERARQFPGQEQQVWEYYRRNAQAMASLRAPLFEEKVVDFLLELAKVTEKQVSREELYKEEEEKAA.

One can recognise a PPIase FKBP-type domain in the interval 169 to 254; it reads GDRITVDFVG…AKQVEAPGEL (86 aa).

Belongs to the FKBP-type PPIase family. Tig subfamily.

The protein localises to the cytoplasm. It catalyses the reaction [protein]-peptidylproline (omega=180) = [protein]-peptidylproline (omega=0). In terms of biological role, involved in protein export. Acts as a chaperone by maintaining the newly synthesized protein in an open conformation. Functions as a peptidyl-prolyl cis-trans isomerase. The chain is Trigger factor from Azorhizobium caulinodans (strain ATCC 43989 / DSM 5975 / JCM 20966 / LMG 6465 / NBRC 14845 / NCIMB 13405 / ORS 571).